A 117-amino-acid polypeptide reads, in one-letter code: Large ribosomal subunit protein bL20 (117 aa).

It belongs to the bacterial ribosomal protein bL20 family.

Functionally, binds directly to 23S ribosomal RNA and is necessary for the in vitro assembly process of the 50S ribosomal subunit. It is not involved in the protein synthesizing functions of that subunit. The chain is Large ribosomal subunit protein bL20 from Roseiflexus sp. (strain RS-1).